Consider the following 418-residue polypeptide: Mitochondrial outer membrane protein SLC25A46 (418 aa).

The tract at residues 1-30 (MHPRRPDGFDGLGYRGGARDEQGFGGAFPA) is disordered. S32 bears the Phosphoserine mark. Positions 44-93 (TTPPDIPGSRNLHWGEKSPPYGVPTTSTPYEGPTEEPFSSGGGGSVQGQS) are disordered. Phosphothreonine is present on T45. Residues 96 to 187 (QLNRFAGFGI…GIISEFTPLP (92 aa)) form a Solcar 1 repeat. The next 6 helical transmembrane spans lie at 103–123 (FGIGLASLFTENVLAHPCIVL), 167–187 (FIVQGVTLGAEGIISEFTPLP), 202–222 (HLLLKSLTYVVAMPFYSASLI), 258–278 (LLPLLSLIFPTVLHGVLHYII), 314–334 (FPELIANFAASLCSDVILYPL), and 382–402 (VFGFYKGFGAVIIQYTLHAAV). The stretch at 311–413 (DAYFPELIAN…QITKIIYSTL (103 aa)) is one Solcar 2 repeat.

The protein belongs to the mitochondrial carrier (TC 2.A.29) family. Associates with the mitochondrial contact site and cristae organizing system (MICOS) complex. May associate with the endoplasmic reticulum membrane protein complex (EMC).

The protein localises to the mitochondrion outer membrane. Functionally, transmembrane protein of the mitochondrial outer membrane that controls mitochondrial organization. May regulate the assembly of the MICOS (mitochondrial contact site and cristae organizing system) complex which is essential to the biogenesis and dynamics of mitochondrial cristae, the inwards folds of the inner mitochondrial membrane. Through its interaction with the EMC (endoplasmic reticulum membrane protein complex), could regulate mitochondrial lipid homeostasis and thereby mitochondrial fission. The polypeptide is Mitochondrial outer membrane protein SLC25A46 (Homo sapiens (Human)).